The sequence spans 292 residues: Zinc finger protein OZF (292 aa).

C2H2-type zinc fingers lie at residues 16-38 (FACK…EHFH), 44-66 (FECN…QNTH), 72-94 (LECN…QKIH), 100-122 (FECK…QRTH), 128-150 (FICK…EKIH), 156-178 (FKCN…QNIH), 184-206 (YECN…VRIH), 212-234 (YECN…VRSH), 240-262 (YGCN…LRIH), and 268-290 (YQCS…QKIH). Glycyl lysine isopeptide (Lys-Gly) (interchain with G-Cter in SUMO2) cross-links involve residues lysine 28, lysine 51, and lysine 56. Glycyl lysine isopeptide (Lys-Gly) (interchain with G-Cter in SUMO) cross-links involve residues lysine 157 and lysine 169. Residue lysine 173 forms a Glycyl lysine isopeptide (Lys-Gly) (interchain with G-Cter in SUMO2) linkage. The tract at residues 212–292 (YECNVCGKAF…HIRHQKIHTH (81 aa)) is interaction with TERF2IP.

The protein belongs to the krueppel C2H2-type zinc-finger protein family. In terms of assembly, binds DNA. Interacts with SUMO conjugating enzyme UBC9/UBE2I. Interacts with the telomeric protein TERF2IP.

The protein resides in the nucleus. The polypeptide is Zinc finger protein OZF (ZNF146) (Bos taurus (Bovine)).